We begin with the raw amino-acid sequence, 541 residues long: Amino-acid permease 2 (541 aa).

Polar residues predominate over residues Met-1–Gln-22. Residues Met-1–Gly-43 form a disordered region. Low complexity predominate over residues Gly-23–Glu-41. A run of 12 helical transmembrane segments spans residues Phe-66 to Gly-86, Gly-90 to Ala-110, Val-139 to Ala-159, Val-188 to Ala-208, Thr-214 to Val-234, Gly-255 to Thr-275, Ala-301 to Gly-321, Pro-347 to Ile-367, Pro-399 to Ala-419, Ile-424 to Ile-444, Val-464 to Pro-484, and Tyr-496 to Gly-516.

Belongs to the amino acid-polyamine-organocation (APC) superfamily.

It is found in the membrane. This is Amino-acid permease 2 (aap-2) from Neurospora crassa (strain ATCC 24698 / 74-OR23-1A / CBS 708.71 / DSM 1257 / FGSC 987).